The sequence spans 1712 residues: U3 small nucleolar RNA-associated protein 10 (1712 aa).

HEAT repeat units lie at residues 164-202 (EELVLRILPVLNSCMQAKYGAETVAACYSIVTVLAGRGE), 490-528 (TCDFQNLIPYLLHALADPSAPVRRAAAACTVALSEASGS), 564-605 (TLLS…PKHG), 987-1025 (TQTISRVVPQLAASLRAKHKNFLTGVSDLLLSFTAAFEH), 1236-1275 (VISLISFLPSVEKVLQQSQHTDAKIISVGCIDRIVERFGK), 1605-1646 (EEVT…DSAA), and 1667-1705 (LGLLPEMLPFISELREDDDEMVERETQRWISQVEGVLGE).

This sequence belongs to the HEATR1/UTP10 family. Component of the ribosomal small subunit (SSU) processome.

The protein resides in the nucleus. It localises to the nucleolus. In terms of biological role, involved in nucleolar processing of pre-18S ribosomal RNA. Involved in ribosome biosynthesis. The protein is U3 small nucleolar RNA-associated protein 10 of Phaeosphaeria nodorum (strain SN15 / ATCC MYA-4574 / FGSC 10173) (Glume blotch fungus).